Here is a 553-residue protein sequence, read N- to C-terminus: Probable malate:quinone oxidoreductase (553 aa).

The span at 534-543 (QLKPQVQPQP) shows a compositional bias: low complexity. The segment at 534-553 (QLKPQVQPQPAHKAVADIAL) is disordered.

The protein belongs to the MQO family. FAD serves as cofactor.

It catalyses the reaction (S)-malate + a quinone = a quinol + oxaloacetate. It participates in carbohydrate metabolism; tricarboxylic acid cycle; oxaloacetate from (S)-malate (quinone route): step 1/1. This is Probable malate:quinone oxidoreductase from Citrobacter koseri (strain ATCC BAA-895 / CDC 4225-83 / SGSC4696).